Reading from the N-terminus, the 154-residue chain is Peptidoglycan amidase Tse1 (154 aa).

Cys7 and Cys148 are disulfide-bonded. The active-site Nucleophile is Cys30. The active-site Proton acceptor is the His91.

As to quaternary structure, forms a heterotetramer with Tsi1 consisting of two Tse1 dimers and two Tsi1 dimers. Formation of the complex inactivates Tse1 enzymatic activity.

The protein resides in the host membrane. The protein localises to the secreted. It carries out the reaction Hydrolysis of gamma-D-glutamyl bonds to the L-terminus (position 7) of meso-diaminopimelic acid (meso-A2pm) in 7-(L-Ala-gamma-D-Glu)-meso-A2pm and 7-(L-Ala-gamma-D-Glu)-7-(D-Ala)-meso-A2pm. It is required that the D-terminal amino and carboxy groups of meso-A2pm are unsubstituted.. Functionally, toxin secreted by the H1 type VI (H1-T6SS) secretion system into the periplasm of recipient cells. Degrades peptidoglycan via amidase activity thereby helping itself to compete with other bacteria. To protect itself, the bacterium synthesizes immunity protein Tsi1 that specifically interacts with and inactivates cognate toxin. In Pseudomonas aeruginosa (strain ATCC 15692 / DSM 22644 / CIP 104116 / JCM 14847 / LMG 12228 / 1C / PRS 101 / PAO1), this protein is Peptidoglycan amidase Tse1.